The chain runs to 103 residues: Small ribosomal subunit protein uS10 (103 aa).

It belongs to the universal ribosomal protein uS10 family. Part of the 30S ribosomal subunit.

Involved in the binding of tRNA to the ribosomes. In Salinibacter ruber (strain DSM 13855 / M31), this protein is Small ribosomal subunit protein uS10.